A 387-amino-acid chain; its full sequence is NAD(P)H oxidoreductase RTN4IP1, mitochondrial (387 aa).

The N-terminal 27 residues, 1-27, are a transit peptide targeting the mitochondrion; the sequence is MLMCRRWLVCSLRCHYRSFSFSAARRT. The 342-residue stretch at 38 to 379 folds into the Enoyl reductase (ER) domain; the sequence is GKNDVLRFTK…QGHARGKTVV (342 aa). NADPH is bound by residues serine 200, glycine 202, valine 203, serine 223, tyrosine 241, leucine 286, glycine 327, phenylalanine 329, histidine 372, alanine 373, and arginine 374.

It belongs to the zinc-containing alcohol dehydrogenase family. Quinone oxidoreductase subfamily.

It is found in the mitochondrion matrix. It localises to the mitochondrion outer membrane. The enzyme catalyses a 3-demethylubiquinone + NADH + 2 H(+) = a 3-demethylubiquinol + NAD(+). It catalyses the reaction a 3-demethylubiquinone + NADPH + 2 H(+) = a 3-demethylubiquinol + NADP(+). It carries out the reaction 3-demethylubiquinone-10 + NADH + 2 H(+) = 3-demethylubiquinol-10 + NAD(+). The catalysed reaction is 3-demethylubiquinone-10 + NADPH + 2 H(+) = 3-demethylubiquinol-10 + NADP(+). The protein operates within cofactor biosynthesis; ubiquinone biosynthesis. In terms of biological role, NAD(P)H oxidoreductase involved in the ubiquinone biosynthetic pathway. Required for the O-methyltransferase activity of COQ3. Able to catalyze the oxidoreduction of 3-demethylubiquinone into 3-demethylubiquinol in vitro. However, it is unclear if 3-demethylubiquinone constitutes a substrate in vivo. May also play a role in the regulation of retinal ganglion cell (RGC) neurite outgrowth, and hence in the development of the inner retina and optic nerve. This is NAD(P)H oxidoreductase RTN4IP1, mitochondrial (rtn4ip1) from Danio rerio (Zebrafish).